A 576-amino-acid polypeptide reads, in one-letter code: Lysine--tRNA ligase (576 aa).

Mg(2+) is bound by residues glutamate 412 and glutamate 419.

It belongs to the class-II aminoacyl-tRNA synthetase family. Homodimer. Mg(2+) serves as cofactor.

It is found in the cytoplasm. The catalysed reaction is tRNA(Lys) + L-lysine + ATP = L-lysyl-tRNA(Lys) + AMP + diphosphate. In Phocaeicola vulgatus (strain ATCC 8482 / DSM 1447 / JCM 5826 / CCUG 4940 / NBRC 14291 / NCTC 11154) (Bacteroides vulgatus), this protein is Lysine--tRNA ligase.